A 288-amino-acid polypeptide reads, in one-letter code: ATP synthase gamma chain (288 aa).

This sequence belongs to the ATPase gamma chain family. As to quaternary structure, F-type ATPases have 2 components, CF(1) - the catalytic core - and CF(0) - the membrane proton channel. CF(1) has five subunits: alpha(3), beta(3), gamma(1), delta(1), epsilon(1). CF(0) has three main subunits: a, b and c.

Its subcellular location is the cell inner membrane. Produces ATP from ADP in the presence of a proton gradient across the membrane. The gamma chain is believed to be important in regulating ATPase activity and the flow of protons through the CF(0) complex. The polypeptide is ATP synthase gamma chain (Aliivibrio fischeri (strain ATCC 700601 / ES114) (Vibrio fischeri)).